A 201-amino-acid chain; its full sequence is Probable molybdenum cofactor guanylyltransferase (201 aa).

GTP-binding positions include 16–18 (LAG), K28, D75, and D107. Mg(2+) is bound at residue D107.

This sequence belongs to the MobA family. Mg(2+) is required as a cofactor.

The protein localises to the cytoplasm. It carries out the reaction Mo-molybdopterin + GTP + H(+) = Mo-molybdopterin guanine dinucleotide + diphosphate. In terms of biological role, transfers a GMP moiety from GTP to Mo-molybdopterin (Mo-MPT) cofactor (Moco or molybdenum cofactor) to form Mo-molybdopterin guanine dinucleotide (Mo-MGD) cofactor. This chain is Probable molybdenum cofactor guanylyltransferase, found in Mycobacterium marinum (strain ATCC BAA-535 / M).